A 211-amino-acid polypeptide reads, in one-letter code: DNA dC-&gt;dU-editing enzyme APOBEC-3H (211 aa).

The CMP/dCMP-type deaminase domain maps to 4–126; that stretch reads LTAKTFSLQF…RRQQEGLRLL (123 aa). His-54 serves as a coordination point for Zn(2+). Glu-56 (proton donor) is an active-site residue. 2 residues coordinate Zn(2+): Cys-85 and Cys-88.

This sequence belongs to the cytidine and deoxycytidylate deaminase family. Homodimer. The cofactor is Zn(2+).

The protein resides in the cytoplasm. It catalyses the reaction a 2'-deoxycytidine in single-stranded DNA + H2O + H(+) = a 2'-deoxyuridine in single-stranded DNA + NH4(+). In terms of biological role, DNA deaminase (cytidine deaminase) which may act as an inhibitor of retrovirus replication and retrotransposon mobility via deaminase-dependent and -independent mechanisms. The protein is DNA dC-&gt;dU-editing enzyme APOBEC-3H of Pongo pygmaeus (Bornean orangutan).